A 452-amino-acid chain; its full sequence is MRECISIHVGQAGVQMGNACWELYCLEHGIQPDGQMPSDKTIGGGDDSFNTFFSETGAGKHVPRAVFVDLEPTVVDEVRTGTYRQLFHPEQLITGKEDAANNYARGHYTVGKELIDIVLDRIRKLADQCTGLQGFLIFHSFGGGTGSGFSSLLMERLSVDYGKKSKLEFAVYPAPQISTAVVEPYNSILTTHTTLEHSDCAFMVDNEAIYDICRRNLDIERPTYTNLNRLIGQIVSSITASLRFDGALNVDLTEFQTNLVPYPRIHFPLATYAPVISAEKAYHEQLTVSEITNACFEPANQMVKCDPRHGKYMACCLLYRGDVVPKDVNAAIATIKTKRTIQFVDWCPTGFKVGINYQPPTVVPGGDLAKVQRAVCMLSNTTAIAEAWARLDHKFDLMYAKRAFVHWYVGEGMEEGEFSEAREDLAALEKDYEEVGVDSADAEGEEEEGDEY.

Gln11 is a binding site for GTP. The residue at position 40 (Lys40) is an N6-acetyllysine. 7 residues coordinate GTP: Glu71, Ser140, Gly144, Thr145, Thr179, Asn206, and Asn228. Residue Glu71 coordinates Mg(2+). Glu254 is an active-site residue. The tract at residues 433 to 452 is disordered; the sequence is EEVGVDSADAEGEEEEGDEY.

Belongs to the tubulin family. Dimer of alpha and beta chains. A typical microtubule is a hollow water-filled tube with an outer diameter of 25 nm and an inner diameter of 15 nM. Alpha-beta heterodimers associate head-to-tail to form protofilaments running lengthwise along the microtubule wall with the beta-tubulin subunit facing the microtubule plus end conferring a structural polarity. Microtubules usually have 13 protofilaments but different protofilament numbers can be found in some organisms and specialized cells. It depends on Mg(2+) as a cofactor. Post-translationally, undergoes a tyrosination/detyrosination cycle, the cyclic removal and re-addition of a C-terminal tyrosine residue by the enzymes tubulin tyrosine carboxypeptidase (TTCP) and tubulin tyrosine ligase (TTL), respectively. Acetylation of alpha chains at Lys-40 stabilizes microtubules and affects affinity and processivity of microtubule motors. This modification has a role in multiple cellular functions, ranging from cell motility, cell cycle progression or cell differentiation to intracellular trafficking and signaling.

It localises to the cytoplasm. Its subcellular location is the cytoskeleton. It carries out the reaction GTP + H2O = GDP + phosphate + H(+). Its function is as follows. Tubulin is the major constituent of microtubules, a cylinder consisting of laterally associated linear protofilaments composed of alpha- and beta-tubulin heterodimers. Microtubules grow by the addition of GTP-tubulin dimers to the microtubule end, where a stabilizing cap forms. Below the cap, tubulin dimers are in GDP-bound state, owing to GTPase activity of alpha-tubulin. This chain is Tubulin alpha-1 chain, found in Paracentrotus lividus (Common sea urchin).